A 296-amino-acid chain; its full sequence is MFKRYLQVTKPGIIMGNLISVAGGFFLASRGEIDWILMLATVIGLSLVVASGCAINNYIDRDIDAKMQRTRNRVTVNGEMSGKAAFFHGIVLGVIGFALLSYFTNWVAVAFAAFGYVVYVGLYTMYFKRKSVYGTFVGSLSGAVPPVVGYCAAAGQFDAGAAILLTMFCIWQMPHSYAIAIFRYKDYEAAGIPVLPVSQGIAKAKRHIILHIAAFAVVAALLPLTGYVGIGFMVVALATSLWWLAMALRGYRPGIDVNGWARQVFFFSIITVTALSVTMALDFNEVSPNLLVFAAH.

8 consecutive transmembrane segments (helical) span residues 8–28 (VTKP…FFLA), 35–55 (WILM…GCAI), 84–104 (AAFF…SYFT), 107–127 (VAVA…TMYF), 132–152 (VYGT…GYCA), 162–182 (AILL…IAIF), 215–235 (FAVV…FMVV), and 264–284 (VFFF…LDFN).

The protein belongs to the UbiA prenyltransferase family. Protoheme IX farnesyltransferase subfamily.

The protein localises to the cell inner membrane. It carries out the reaction heme b + (2E,6E)-farnesyl diphosphate + H2O = Fe(II)-heme o + diphosphate. It participates in porphyrin-containing compound metabolism; heme O biosynthesis; heme O from protoheme: step 1/1. Converts heme B (protoheme IX) to heme O by substitution of the vinyl group on carbon 2 of heme B porphyrin ring with a hydroxyethyl farnesyl side group. The sequence is that of Protoheme IX farnesyltransferase from Marinomonas sp. (strain MWYL1).